Consider the following 518-residue polypeptide: Probable alginate O-acetylase AlgI (518 aa).

A run of 8 helical transmembrane segments spans residues 2 to 24 (VFSSNVFLFMFLPIFLGLYYLSG), 39 to 61 (FYAWWRVDFLALFIGVTVWNYWI), 78 to 100 (WLLLGVIVDLCILGYFKYANFGV), 115 to 137 (FILTHVLLPIGISFYVFESISYI), 150 to 172 (NLIDFAAFVAIFPHLIAGPVLRF), 319 to 341 (GLWHGANVTYIIWGAWHGMWLAI), 354 to 373 (FNVIRWALTFLLVVIGWVIF), and 402 to 424 (ASLTGLQVATLVVAYATLAFFGL). Residue His322 is part of the active site. The tract at residues 435–456 (SGKSARADGPATEQPGTIKAVP) is disordered. A helical transmembrane segment spans residues 493-515 (LILLLFVASILKLSAQSFSPFLY).

Belongs to the membrane-bound acyltransferase family.

Its subcellular location is the cell inner membrane. It participates in glycan biosynthesis; alginate biosynthesis. Its function is as follows. Together with AlgJ and AlgF, forms an inner membrane complex which probably interacts with the alginate polymerization-transport complex and adds acetyl groups at the O-2 and O-3 positions of mannuronate residues. Acetylation of alginate is important for the architecture of biofilms and increases the ability of alginate to act as a defense barrier. This chain is Probable alginate O-acetylase AlgI (algI), found in Pseudomonas syringae pv. tomato (strain ATCC BAA-871 / DC3000).